Consider the following 223-residue polypeptide: Endonuclease V (223 aa).

Aspartate 35 and aspartate 103 together coordinate Mg(2+).

It belongs to the endonuclease V family. Requires Mg(2+) as cofactor.

The protein localises to the cytoplasm. The enzyme catalyses Endonucleolytic cleavage at apurinic or apyrimidinic sites to products with a 5'-phosphate.. In terms of biological role, DNA repair enzyme involved in the repair of deaminated bases. Selectively cleaves double-stranded DNA at the second phosphodiester bond 3' to a deoxyinosine leaving behind the intact lesion on the nicked DNA. The sequence is that of Endonuclease V from Escherichia coli O139:H28 (strain E24377A / ETEC).